The chain runs to 198 residues: Pyridoxine/pyridoxamine 5'-phosphate oxidase (198 aa).

Residues 47 to 52 (RMVLVK), 62 to 63 (FT), Arg68, Lys69, and Gln91 each bind FMN. A substrate-binding site is contributed by Lys52. 3 residues coordinate substrate: Tyr109, Arg113, and Ser117. FMN is bound by residues 126–127 (QS) and Trp171. Substrate is bound at residue 177–179 (RLH). Arg181 is an FMN binding site.

It belongs to the pyridoxamine 5'-phosphate oxidase family. In terms of assembly, homodimer. FMN serves as cofactor.

The catalysed reaction is pyridoxamine 5'-phosphate + O2 + H2O = pyridoxal 5'-phosphate + H2O2 + NH4(+). The enzyme catalyses pyridoxine 5'-phosphate + O2 = pyridoxal 5'-phosphate + H2O2. Its pathway is cofactor metabolism; pyridoxal 5'-phosphate salvage; pyridoxal 5'-phosphate from pyridoxamine 5'-phosphate: step 1/1. It functions in the pathway cofactor metabolism; pyridoxal 5'-phosphate salvage; pyridoxal 5'-phosphate from pyridoxine 5'-phosphate: step 1/1. Functionally, catalyzes the oxidation of either pyridoxine 5'-phosphate (PNP) or pyridoxamine 5'-phosphate (PMP) into pyridoxal 5'-phosphate (PLP). The sequence is that of Pyridoxine/pyridoxamine 5'-phosphate oxidase from Anaeromyxobacter dehalogenans (strain 2CP-C).